Here is a 128-residue protein sequence, read N- to C-terminus: Aspartate 1-decarboxylase (128 aa).

Serine 25 acts as the Schiff-base intermediate with substrate; via pyruvic acid in catalysis. Serine 25 carries the post-translational modification Pyruvic acid (Ser). Threonine 57 is a binding site for substrate. Tyrosine 58 functions as the Proton donor in the catalytic mechanism. 73–75 (GSA) serves as a coordination point for substrate.

It belongs to the PanD family. As to quaternary structure, heterooctamer of four alpha and four beta subunits. It depends on pyruvate as a cofactor. Is synthesized initially as an inactive proenzyme, which is activated by self-cleavage at a specific serine bond to produce a beta-subunit with a hydroxyl group at its C-terminus and an alpha-subunit with a pyruvoyl group at its N-terminus.

The protein resides in the cytoplasm. It carries out the reaction L-aspartate + H(+) = beta-alanine + CO2. Its pathway is cofactor biosynthesis; (R)-pantothenate biosynthesis; beta-alanine from L-aspartate: step 1/1. In terms of biological role, catalyzes the pyruvoyl-dependent decarboxylation of aspartate to produce beta-alanine. The polypeptide is Aspartate 1-decarboxylase (Burkholderia lata (strain ATCC 17760 / DSM 23089 / LMG 22485 / NCIMB 9086 / R18194 / 383)).